Consider the following 484-residue polypeptide: MPISDFQVVIGLEVHAQLLTASKIFCGCSTAFGAAPNAHTCPVCLGLPGALPALNRSVVEMAVRTGLALGCEIRPKSVFARKNYFYPDLPKGYQISQYELPICEGGEVTFTLDGRDHTARLVRIHMEEDAGKNVHDVAADGASGVDLNRAGVPLVEIVSRPDLRSAEEAVEYLKALRAILMALGVNDGNMQEGSLRCDANVSVMRKGASELGTRCEIKNMNSFRFLKQAIEFEARRQVELIEAGEPVVQETRLFDPDRGETRSMRSKEEAHDYRYFPEPDLPPVIVEAALVERIRGELPELPRARAERYQRSLGLSAYDAGNLVADAAVSAWFDAALAAYGAGPEAAKKVANWVTGELARLANETGEAPAAWKVTPARLAATLRLVDAGTIGGPGAKQVLEEVFRTGAEPDAVVKAKGLAQVSDEGAIEAAVDKVLAANPGEAEKYRGGRKNLLGFFVGQVMKEMRGKGNPAVVNALLRRKLGD.

It belongs to the GatB/GatE family. GatB subfamily. Heterotrimer of A, B and C subunits.

It catalyses the reaction L-glutamyl-tRNA(Gln) + L-glutamine + ATP + H2O = L-glutaminyl-tRNA(Gln) + L-glutamate + ADP + phosphate + H(+). The catalysed reaction is L-aspartyl-tRNA(Asn) + L-glutamine + ATP + H2O = L-asparaginyl-tRNA(Asn) + L-glutamate + ADP + phosphate + 2 H(+). In terms of biological role, allows the formation of correctly charged Asn-tRNA(Asn) or Gln-tRNA(Gln) through the transamidation of misacylated Asp-tRNA(Asn) or Glu-tRNA(Gln) in organisms which lack either or both of asparaginyl-tRNA or glutaminyl-tRNA synthetases. The reaction takes place in the presence of glutamine and ATP through an activated phospho-Asp-tRNA(Asn) or phospho-Glu-tRNA(Gln). The polypeptide is Aspartyl/glutamyl-tRNA(Asn/Gln) amidotransferase subunit B (Anaeromyxobacter sp. (strain K)).